A 393-amino-acid chain; its full sequence is Riboflavin biosynthesis protein RibBA (393 aa).

The interval 1 to 200 (MQFDNIDSAL…IDDLIEYRKK (200 aa)) is DHBP synthase. Residues 27–28 (RE), aspartate 32, 139–143 (RNGHT), and glutamate 163 each bind D-ribulose 5-phosphate. A Mg(2+)-binding site is contributed by glutamate 28. Histidine 142 contacts Mg(2+). The GTP cyclohydrolase II stretch occupies residues 201–393 (LEPEIEFKAK…TKKIKMGHLI (193 aa)). Residue 249-253 (RLHSA) participates in GTP binding. 3 residues coordinate Zn(2+): cysteine 254, cysteine 265, and cysteine 267. GTP-binding positions include glutamine 270, 291 to 293 (EGR), and threonine 313. The active-site Proton acceptor; for GTP cyclohydrolase activity is aspartate 325. The active-site Nucleophile; for GTP cyclohydrolase activity is arginine 327. Positions 348 and 353 each coordinate GTP.

This sequence in the N-terminal section; belongs to the DHBP synthase family. The protein in the C-terminal section; belongs to the GTP cyclohydrolase II family. Mg(2+) is required as a cofactor. The cofactor is Mn(2+). Requires Zn(2+) as cofactor.

The enzyme catalyses D-ribulose 5-phosphate = (2S)-2-hydroxy-3-oxobutyl phosphate + formate + H(+). It catalyses the reaction GTP + 4 H2O = 2,5-diamino-6-hydroxy-4-(5-phosphoribosylamino)-pyrimidine + formate + 2 phosphate + 3 H(+). Its pathway is cofactor biosynthesis; riboflavin biosynthesis; 2-hydroxy-3-oxobutyl phosphate from D-ribulose 5-phosphate: step 1/1. It functions in the pathway cofactor biosynthesis; riboflavin biosynthesis; 5-amino-6-(D-ribitylamino)uracil from GTP: step 1/4. Its function is as follows. Catalyzes the conversion of D-ribulose 5-phosphate to formate and 3,4-dihydroxy-2-butanone 4-phosphate. Functionally, catalyzes the conversion of GTP to 2,5-diamino-6-ribosylamino-4(3H)-pyrimidinone 5'-phosphate (DARP), formate and pyrophosphate. The polypeptide is Riboflavin biosynthesis protein RibBA (Staphylococcus aureus (strain MRSA252)).